A 336-amino-acid polypeptide reads, in one-letter code: 25S rRNA (uridine(2634)-N(3))-methyltransferase (336 aa).

Residues 286-307 (PGYHHRRTNSEQDTTKPAKERD) form a disordered region. Residues 293–307 (TNSEQDTTKPAKERD) show a composition bias toward basic and acidic residues.

It belongs to the class I-like SAM-binding methyltransferase superfamily. BMT5 family.

Its subcellular location is the nucleus. The protein resides in the nucleolus. It carries out the reaction uridine(2634) in 25S rRNA + S-adenosyl-L-methionine = N(3)-methyluridine(2634) in 25S rRNA + S-adenosyl-L-homocysteine + H(+). Its function is as follows. S-adenosyl-L-methionine-dependent methyltransferase that specifically methylates the N(3) position of uridine 2634 (m3U2634) in 25S rRNA. This is 25S rRNA (uridine(2634)-N(3))-methyltransferase (BMT5) from Saccharomyces cerevisiae (strain ATCC 204508 / S288c) (Baker's yeast).